The sequence spans 168 residues: Large ribosomal subunit protein uL10 (168 aa).

Belongs to the universal ribosomal protein uL10 family. Part of the ribosomal stalk of the 50S ribosomal subunit. The N-terminus interacts with L11 and the large rRNA to form the base of the stalk. The C-terminus forms an elongated spine to which L12 dimers bind in a sequential fashion forming a multimeric L10(L12)X complex.

Functionally, forms part of the ribosomal stalk, playing a central role in the interaction of the ribosome with GTP-bound translation factors. The protein is Large ribosomal subunit protein uL10 of Lacticaseibacillus casei (strain BL23) (Lactobacillus casei).